The sequence spans 967 residues: Phosphoenolpyruvate carboxylase 1 (967 aa).

S11 is modified (phosphoserine). Active-site residues include H173 and K602. At S704 the chain carries Phosphoserine.

The protein belongs to the PEPCase type 1 family. In terms of assembly, homotetramer. The cofactor is Mg(2+). Requires Mn(2+) as cofactor. Post-translationally, the phosphorylation of Ser-11 is reversibly promoted by inorganic phosphate (Pi) deprivation. Enhanced activity by phosphorylation at pH 7.3 by lowering Km and sensitivity to inhibition by L-malate and L-aspartate, while enhancing activation by glucose 6-phosphate. As to expression, expressed in all plant organs, with higher levels in roots.

The protein localises to the cytoplasm. It catalyses the reaction oxaloacetate + phosphate = phosphoenolpyruvate + hydrogencarbonate. Its activity is regulated as follows. By light-reversible phosphorylation. Activated by inorganic phosphate (Pi) deprivation and glucose 6-phosphate. Inhibited by L-malate and L-aspartate. Through the carboxylation of phosphoenolpyruvate (PEP) it forms oxaloacetate, a four-carbon dicarboxylic acid source for the tricarboxylic acid cycle. Contributes probably to the adaptation to inorganic phosphate (Pi) deprivation. The polypeptide is Phosphoenolpyruvate carboxylase 1 (PPC1) (Arabidopsis thaliana (Mouse-ear cress)).